The chain runs to 306 residues: Recombination-associated protein RdgC (306 aa).

The protein belongs to the RdgC family.

It localises to the cytoplasm. It is found in the nucleoid. May be involved in recombination. This is Recombination-associated protein RdgC from Pseudomonas aeruginosa (strain ATCC 15692 / DSM 22644 / CIP 104116 / JCM 14847 / LMG 12228 / 1C / PRS 101 / PAO1).